The chain runs to 376 residues: Thymidine kinase (376 aa).

The interval 1–44 is disordered; the sequence is MASYPGHQHASAFDQAARSRGHSNRRTALRPRRQQEATEVRPEQ. Basic residues predominate over residues 19-32; the sequence is SRGHSNRRTALRPR. Residues 33–44 show a composition bias toward basic and acidic residues; it reads RQQEATEVRPEQ. Residue 56-63 coordinates ATP; sequence GPHGMGKT. Residue glutamate 83 is the Proton acceptor of the active site. Tyrosine 101 and glutamine 125 together coordinate substrate. Arginine 216 provides a ligand contact to ATP. Arginine 222 serves as a coordination point for substrate. A disordered region spans residues 260-280; the sequence is GQLSGTAVPPQGAEPQSNAGP.

It belongs to the herpesviridae thymidine kinase family. As to quaternary structure, homodimer.

The enzyme catalyses thymidine + ATP = dTMP + ADP + H(+). In terms of biological role, catalyzes the transfer of the gamma-phospho group of ATP to thymidine to generate dTMP in the salvage pathway of pyrimidine synthesis. The dTMP serves as a substrate for DNA polymerase during viral DNA replication. Allows the virus to be reactivated and to grow in non-proliferative cells lacking a high concentration of phosphorylated nucleic acid precursors. The polypeptide is Thymidine kinase (Human herpesvirus 1 (strain SC16) (HHV-1)).